The following is a 270-amino-acid chain: MTKVVVTGAAGRMGTQIVRLVRATPGLAVSGAVERAGSPAIGKDAGTLAGGEPLGVAVVDDLAKALAGADVVIDFTSHEASVRHAQACAAAGVALVIGSTGFTPDAKAKVAEAARKVPVVLSPNMSVGVNVVFELVRQAARVLGDGYDVEIVEIHHKHKRDAPSGTAVRLGEVAAEALGRAPADALAYTRHGILGERPPWQIGIQTLRGGDVVGEHTVFFCGEGERVEITHRATSREQFARGAARAAAWLPGKPPGVYDMADVLGLRGGK.

NAD(+)-binding positions include 8–13 (GAAGRM) and E34. R35 is an NADP(+) binding site. Residues 98–100 (GST) and 122–125 (SPNM) contribute to the NAD(+) site. H155 acts as the Proton donor/acceptor in catalysis. H156 contributes to the (S)-2,3,4,5-tetrahydrodipicolinate binding site. K159 functions as the Proton donor in the catalytic mechanism. 165 to 166 (GT) lines the (S)-2,3,4,5-tetrahydrodipicolinate pocket.

The protein belongs to the DapB family.

The protein resides in the cytoplasm. It catalyses the reaction (S)-2,3,4,5-tetrahydrodipicolinate + NAD(+) + H2O = (2S,4S)-4-hydroxy-2,3,4,5-tetrahydrodipicolinate + NADH + H(+). The catalysed reaction is (S)-2,3,4,5-tetrahydrodipicolinate + NADP(+) + H2O = (2S,4S)-4-hydroxy-2,3,4,5-tetrahydrodipicolinate + NADPH + H(+). The protein operates within amino-acid biosynthesis; L-lysine biosynthesis via DAP pathway; (S)-tetrahydrodipicolinate from L-aspartate: step 4/4. In terms of biological role, catalyzes the conversion of 4-hydroxy-tetrahydrodipicolinate (HTPA) to tetrahydrodipicolinate. This Anaeromyxobacter dehalogenans (strain 2CP-1 / ATCC BAA-258) protein is 4-hydroxy-tetrahydrodipicolinate reductase.